The sequence spans 338 residues: Ketol-acid reductoisomerase (NADP(+)) (338 aa).

Residues 3-183 (IDVFYDDDAD…GGARAGVIPT (181 aa)) form the KARI N-terminal Rossmann domain. NADP(+) is bound by residues 26-29 (YGSQ), R49, S52, S54, and 84-87 (DTSQ). The active site involves H109. G135 lines the NADP(+) pocket. The 146-residue stretch at 184-329 (TFEAETVTDL…AKLRDLMSWV (146 aa)) folds into the KARI C-terminal knotted domain. Residues D192, E196, E228, and E232 each coordinate Mg(2+). S253 is a binding site for substrate.

Belongs to the ketol-acid reductoisomerase family. The cofactor is Mg(2+).

It catalyses the reaction (2R)-2,3-dihydroxy-3-methylbutanoate + NADP(+) = (2S)-2-acetolactate + NADPH + H(+). The catalysed reaction is (2R,3R)-2,3-dihydroxy-3-methylpentanoate + NADP(+) = (S)-2-ethyl-2-hydroxy-3-oxobutanoate + NADPH + H(+). It participates in amino-acid biosynthesis; L-isoleucine biosynthesis; L-isoleucine from 2-oxobutanoate: step 2/4. It functions in the pathway amino-acid biosynthesis; L-valine biosynthesis; L-valine from pyruvate: step 2/4. In terms of biological role, involved in the biosynthesis of branched-chain amino acids (BCAA). Catalyzes an alkyl-migration followed by a ketol-acid reduction of (S)-2-acetolactate (S2AL) to yield (R)-2,3-dihydroxy-isovalerate. In the isomerase reaction, S2AL is rearranged via a Mg-dependent methyl migration to produce 3-hydroxy-3-methyl-2-ketobutyrate (HMKB). In the reductase reaction, this 2-ketoacid undergoes a metal-dependent reduction by NADPH to yield (R)-2,3-dihydroxy-isovalerate. This is Ketol-acid reductoisomerase (NADP(+)) from Corynebacterium jeikeium (strain K411).